A 161-amino-acid polypeptide reads, in one-letter code: Myosin regulatory light chain A, smooth adductor muscle (161 aa).

The residue at position 1 (A1) is a Blocked amino end (Ala). 2 consecutive EF-hand domains span residues 20–55 (KLMQEMKEAFTMIDQNRDGFIDINDLKEMFSSLGRT) and 89–124 (DTEETLRNAFAMFDELDTKKLNIEYIKDLLENMGDN). Residues D33, N35, D37, and D44 each coordinate Ca(2+).

In molluscan muscle, calcium regulation is associated with myosin rather than with actin. Muscle myosin contains two types of light chains: the catalytic light chain, essential for ATPase activity, and the regulatory light chain, a calcium-binding protein responsible for Ca(2+) dependent binding and Ca(2+) dependent Mg-ATPase activity. This is Myosin regulatory light chain A, smooth adductor muscle from Mizuhopecten yessoensis (Japanese scallop).